Reading from the N-terminus, the 273-residue chain is Dermonecrotic toxin LhSicTox-alphaIA2bii (273 aa).

The active site involves histidine 5. Positions 25 and 27 each coordinate Mg(2+). The Nucleophile role is filled by histidine 41. Intrachain disulfides connect cysteine 45–cysteine 51 and cysteine 47–cysteine 190. Aspartate 85 is a binding site for Mg(2+).

The protein belongs to the arthropod phospholipase D family. Class II subfamily. It depends on Mg(2+) as a cofactor. As to expression, expressed by the venom gland.

The protein resides in the secreted. It catalyses the reaction an N-(acyl)-sphingosylphosphocholine = an N-(acyl)-sphingosyl-1,3-cyclic phosphate + choline. It carries out the reaction an N-(acyl)-sphingosylphosphoethanolamine = an N-(acyl)-sphingosyl-1,3-cyclic phosphate + ethanolamine. The enzyme catalyses a 1-acyl-sn-glycero-3-phosphocholine = a 1-acyl-sn-glycero-2,3-cyclic phosphate + choline. The catalysed reaction is a 1-acyl-sn-glycero-3-phosphoethanolamine = a 1-acyl-sn-glycero-2,3-cyclic phosphate + ethanolamine. Dermonecrotic toxins cleave the phosphodiester linkage between the phosphate and headgroup of certain phospholipids (sphingolipid and lysolipid substrates), forming an alcohol (often choline) and a cyclic phosphate. This toxin acts on sphingomyelin (SM). It may also act on ceramide phosphoethanolamine (CPE), lysophosphatidylcholine (LPC) and lysophosphatidylethanolamine (LPE), but not on lysophosphatidylserine (LPS), and lysophosphatidylglycerol (LPG). It acts by transphosphatidylation, releasing exclusively cyclic phosphate products as second products. Induces dermonecrosis, hemolysis, increased vascular permeability, edema, inflammatory response, and platelet aggregation. This chain is Dermonecrotic toxin LhSicTox-alphaIA2bii, found in Loxosceles hirsuta (Recluse spider).